Reading from the N-terminus, the 365-residue chain is Peptide chain release factor 2 (365 aa).

Gln252 carries the N5-methylglutamine modification.

It belongs to the prokaryotic/mitochondrial release factor family. Post-translationally, methylated by PrmC. Methylation increases the termination efficiency of RF2.

The protein resides in the cytoplasm. In terms of biological role, peptide chain release factor 2 directs the termination of translation in response to the peptide chain termination codons UGA and UAA. The polypeptide is Peptide chain release factor 2 (Escherichia coli O9:H4 (strain HS)).